The primary structure comprises 55 residues: DNA-directed RNA polymerase subunit Rpo10 (55 aa).

Zn(2+)-binding residues include cysteine 6, cysteine 9, cysteine 43, and cysteine 44.

This sequence belongs to the archaeal Rpo10/eukaryotic RPB10 RNA polymerase subunit family. In terms of assembly, part of the RNA polymerase complex. It depends on Zn(2+) as a cofactor.

The protein localises to the cytoplasm. It carries out the reaction RNA(n) + a ribonucleoside 5'-triphosphate = RNA(n+1) + diphosphate. Functionally, DNA-dependent RNA polymerase (RNAP) catalyzes the transcription of DNA into RNA using the four ribonucleoside triphosphates as substrates. The chain is DNA-directed RNA polymerase subunit Rpo10 from Methanothermobacter thermautotrophicus (strain ATCC 29096 / DSM 1053 / JCM 10044 / NBRC 100330 / Delta H) (Methanobacterium thermoautotrophicum).